The following is a 375-amino-acid chain: Probable protein-glutamate methylesterase BB_0415 (375 aa).

The Response regulatory domain occupies 6–120 (SVLIIEYFAV…SHEIKKEQII (115 aa)). The CheB-type methylesterase domain maps to 183–375 (KLRKFDIIAI…KLLKAILINS (193 aa)). Residues serine 195, histidine 221, and aspartate 317 contribute to the active site.

It carries out the reaction [protein]-L-glutamate 5-O-methyl ester + H2O = L-glutamyl-[protein] + methanol + H(+). This chain is Probable protein-glutamate methylesterase BB_0415, found in Borreliella burgdorferi (strain ATCC 35210 / DSM 4680 / CIP 102532 / B31) (Borrelia burgdorferi).